Consider the following 258-residue polypeptide: UPF0246 protein YaaA (258 aa).

Belongs to the UPF0246 family.

In Shigella boydii serotype 18 (strain CDC 3083-94 / BS512), this protein is UPF0246 protein YaaA.